The following is a 166-amino-acid chain: ATP synthase subunit b (166 aa).

A helical transmembrane segment spans residues 27 to 47 (FFVVLLIFLIVLGVIAKWVVP). A disordered region spans residues 124–143 (SADQQLSQQGSAAQSELQSS).

It belongs to the ATPase B chain family. In terms of assembly, F-type ATPases have 2 components, F(1) - the catalytic core - and F(0) - the membrane proton channel. F(1) has five subunits: alpha(3), beta(3), gamma(1), delta(1), epsilon(1). F(0) has three main subunits: a(1), b(2) and c(10-14). The alpha and beta chains form an alternating ring which encloses part of the gamma chain. F(1) is attached to F(0) by a central stalk formed by the gamma and epsilon chains, while a peripheral stalk is formed by the delta and b chains.

Its subcellular location is the cell membrane. F(1)F(0) ATP synthase produces ATP from ADP in the presence of a proton or sodium gradient. F-type ATPases consist of two structural domains, F(1) containing the extramembraneous catalytic core and F(0) containing the membrane proton channel, linked together by a central stalk and a peripheral stalk. During catalysis, ATP synthesis in the catalytic domain of F(1) is coupled via a rotary mechanism of the central stalk subunits to proton translocation. Functionally, component of the F(0) channel, it forms part of the peripheral stalk, linking F(1) to F(0). The protein is ATP synthase subunit b of Mycolicibacterium vanbaalenii (strain DSM 7251 / JCM 13017 / BCRC 16820 / KCTC 9966 / NRRL B-24157 / PYR-1) (Mycobacterium vanbaalenii).